The sequence spans 431 residues: Glutamate-1-semialdehyde 2,1-aminomutase (431 aa).

Lys-269 is modified (N6-(pyridoxal phosphate)lysine).

The protein belongs to the class-III pyridoxal-phosphate-dependent aminotransferase family. HemL subfamily. Homodimer. Requires pyridoxal 5'-phosphate as cofactor.

It is found in the cytoplasm. It carries out the reaction (S)-4-amino-5-oxopentanoate = 5-aminolevulinate. The protein operates within porphyrin-containing compound metabolism; protoporphyrin-IX biosynthesis; 5-aminolevulinate from L-glutamyl-tRNA(Glu): step 2/2. It participates in porphyrin-containing compound metabolism; chlorophyll biosynthesis. This Chlorobium limicola (strain DSM 245 / NBRC 103803 / 6330) protein is Glutamate-1-semialdehyde 2,1-aminomutase.